Reading from the N-terminus, the 258-residue chain is MTSSAPVGVFDSGLGGISVVRQIRTDLPHERILYFGDSANAPYGTKTPEQVRDLSFRIVEDFVEQGAKAVVIACNTATSSAVQELREHYDIPIIGMEPALKVACDRGHGERQSVIVAATPLTLRERKFAALMHRFEDAHTIHKQPCPRLVEIVERGELDDHDLVMRTLHDYFDQYDLAHTDSVVLGCTHFVFYRDYFRELLPNNVAIVDGNEGTARHLEVVLESLGKLAPEEQDGGVILRNSDPGERIAELAQQLLER.

Substrate contacts are provided by residues 11 to 12 and 43 to 44; these read DS and YG. C74 (proton donor/acceptor) is an active-site residue. 75-76 is a substrate binding site; the sequence is NT. C187 acts as the Proton donor/acceptor in catalysis. Residue 188-189 participates in substrate binding; the sequence is TH.

This sequence belongs to the aspartate/glutamate racemases family.

The enzyme catalyses L-glutamate = D-glutamate. The protein operates within cell wall biogenesis; peptidoglycan biosynthesis. Its function is as follows. Provides the (R)-glutamate required for cell wall biosynthesis. This is Glutamate racemase from Bifidobacterium animalis subsp. lactis (strain AD011).